The sequence spans 414 residues: Serine hydroxymethyltransferase (414 aa).

(6S)-5,6,7,8-tetrahydrofolate is bound by residues Leu-121 and 125–127 (GHL). At Lys-229 the chain carries N6-(pyridoxal phosphate)lysine.

Belongs to the SHMT family. As to quaternary structure, homodimer. The cofactor is pyridoxal 5'-phosphate.

It localises to the cytoplasm. The catalysed reaction is (6R)-5,10-methylene-5,6,7,8-tetrahydrofolate + glycine + H2O = (6S)-5,6,7,8-tetrahydrofolate + L-serine. It functions in the pathway one-carbon metabolism; tetrahydrofolate interconversion. Its pathway is amino-acid biosynthesis; glycine biosynthesis; glycine from L-serine: step 1/1. Its function is as follows. Catalyzes the reversible interconversion of serine and glycine with tetrahydrofolate (THF) serving as the one-carbon carrier. This reaction serves as the major source of one-carbon groups required for the biosynthesis of purines, thymidylate, methionine, and other important biomolecules. Also exhibits THF-independent aldolase activity toward beta-hydroxyamino acids, producing glycine and aldehydes, via a retro-aldol mechanism. This Variovorax paradoxus (strain S110) protein is Serine hydroxymethyltransferase.